We begin with the raw amino-acid sequence, 93 residues long: MGRSLKKGPYIDPSVEKKILAMNEKGEKKVFKTWARDCTIFPEMVGHTIAVHNGKTHVPVYITEEMVGHKLGEFAPTRTFRGHGGDERSSRVR.

The protein belongs to the universal ribosomal protein uS19 family.

In terms of biological role, protein S19 forms a complex with S13 that binds strongly to the 16S ribosomal RNA. The chain is Small ribosomal subunit protein uS19 from Symbiobacterium thermophilum (strain DSM 24528 / JCM 14929 / IAM 14863 / T).